The primary structure comprises 619 residues: MPKLRSATSTEGRNMAGARALWRATGVKDNDFGKPIIAIANSFTQFVPGHVHLKDMGSLVAGAIEEAGGIAKEFNTIAVDDGIAMGHGGMLYSLPSRELIADSVEYMVNAHCADALVCISNCDKITPGMLMAALRLNIPVVFVSGGPMEAGKTKLSDKLIKLDLVDAMVAAADSSVSDEDSAKIERSACPTCGSCSGMFTANSMNCLTEALGLSLPGNGSMLATHADRRELFLEAGRRVMALTKRYYEKDDASALPRNIASFKAFENAMALDIAMGGSSNTVLHLLAAAQEADVAFTMDDIDRMSRQVPHLCKVAPSTAKYHMEDVHRAGGVMGILGELDRAGLLHTDVPHVAADAGGNLKSVLAKYDVMQTQDDNVKQFFMAGPAGIPTTKAFSQDCRWPSLDDDRREGCIRSREFAFSQEGGLAVLSGNLADNGCIVKTAGVDESNLTFTGSARVYESQDDAVAGILGGEVVAGDVVVIRYEGPKGGPGMQEMLYPTSYLKSRGLGKACALITDGRFSGGTSGLSIGHVSPEAAAGGTIALIENGDRIEIDIPKRSIKLAVSDAELAARRETMLARGPMAWKPLSRQRYVSMALKAYAMLATSADKGAVRDRSKLED.

Mg(2+) is bound at residue Asp81. Residue Cys122 coordinates [2Fe-2S] cluster. Mg(2+)-binding residues include Asp123 and Lys124. The residue at position 124 (Lys124) is an N6-carboxylysine. A [2Fe-2S] cluster-binding site is contributed by Cys195. Mg(2+) is bound at residue Glu494. The active-site Proton acceptor is the Ser520.

Belongs to the IlvD/Edd family. In terms of assembly, homodimer. The cofactor is [2Fe-2S] cluster. Requires Mg(2+) as cofactor.

It carries out the reaction (2R)-2,3-dihydroxy-3-methylbutanoate = 3-methyl-2-oxobutanoate + H2O. The enzyme catalyses (2R,3R)-2,3-dihydroxy-3-methylpentanoate = (S)-3-methyl-2-oxopentanoate + H2O. It functions in the pathway amino-acid biosynthesis; L-isoleucine biosynthesis; L-isoleucine from 2-oxobutanoate: step 3/4. The protein operates within amino-acid biosynthesis; L-valine biosynthesis; L-valine from pyruvate: step 3/4. Functionally, functions in the biosynthesis of branched-chain amino acids. Catalyzes the dehydration of (2R,3R)-2,3-dihydroxy-3-methylpentanoate (2,3-dihydroxy-3-methylvalerate) into 2-oxo-3-methylpentanoate (2-oxo-3-methylvalerate) and of (2R)-2,3-dihydroxy-3-methylbutanoate (2,3-dihydroxyisovalerate) into 2-oxo-3-methylbutanoate (2-oxoisovalerate), the penultimate precursor to L-isoleucine and L-valine, respectively. This is Dihydroxy-acid dehydratase from Shewanella sp. (strain MR-4).